The following is a 307-amino-acid chain: N-acetylmuramic acid 6-phosphate etherase 2 (307 aa).

The SIS domain maps to 62–225 (ITAAFKQGGR…TTASMIRLGK (164 aa)). E90 (proton donor) is an active-site residue. E121 is a catalytic residue.

This sequence belongs to the GCKR-like family. MurNAc-6-P etherase subfamily. As to quaternary structure, homodimer.

The catalysed reaction is N-acetyl-D-muramate 6-phosphate + H2O = N-acetyl-D-glucosamine 6-phosphate + (R)-lactate. It participates in amino-sugar metabolism; 1,6-anhydro-N-acetylmuramate degradation. Its pathway is amino-sugar metabolism; N-acetylmuramate degradation. The protein operates within cell wall biogenesis; peptidoglycan recycling. In terms of biological role, specifically catalyzes the cleavage of the D-lactyl ether substituent of MurNAc 6-phosphate, producing GlcNAc 6-phosphate and D-lactate. Together with AnmK, is also required for the utilization of anhydro-N-acetylmuramic acid (anhMurNAc) either imported from the medium or derived from its own cell wall murein, and thus plays a role in cell wall recycling. This is N-acetylmuramic acid 6-phosphate etherase 2 from Vibrio cholerae serotype O1 (strain ATCC 39315 / El Tor Inaba N16961).